Consider the following 419-residue polypeptide: Serine hydroxymethyltransferase (419 aa).

Residues leucine 121 and 125–127 (GHL) each bind (6S)-5,6,7,8-tetrahydrofolate. The residue at position 230 (lysine 230) is an N6-(pyridoxal phosphate)lysine.

It belongs to the SHMT family. In terms of assembly, homodimer. Pyridoxal 5'-phosphate serves as cofactor.

The protein localises to the cytoplasm. It carries out the reaction (6R)-5,10-methylene-5,6,7,8-tetrahydrofolate + glycine + H2O = (6S)-5,6,7,8-tetrahydrofolate + L-serine. The protein operates within one-carbon metabolism; tetrahydrofolate interconversion. It participates in amino-acid biosynthesis; glycine biosynthesis; glycine from L-serine: step 1/1. Catalyzes the reversible interconversion of serine and glycine with tetrahydrofolate (THF) serving as the one-carbon carrier. This reaction serves as the major source of one-carbon groups required for the biosynthesis of purines, thymidylate, methionine, and other important biomolecules. Also exhibits THF-independent aldolase activity toward beta-hydroxyamino acids, producing glycine and aldehydes, via a retro-aldol mechanism. The protein is Serine hydroxymethyltransferase of Vesicomyosocius okutanii subsp. Calyptogena okutanii (strain HA).